We begin with the raw amino-acid sequence, 597 residues long: Ribosomal oxygenase 1 (597 aa).

The residue at position 1 (Met1) is an N-acetylmethionine. The interval 1 to 138 is disordered; sequence MDELPNGNGA…HVDDPERPWD (138 aa). Composition is skewed to basic residues over residues 14-24 and 37-48; these read KRGRGRRRRQP and RPRKVRRHRKSA. Residues 49–62 are compositionally biased toward low complexity; that stretch reads ASRVAALRARALLS. Phosphoserine occurs at positions 62 and 65. The segment covering 72-81 has biased composition (basic and acidic residues); that stretch reads VRGKRERPAE. Ser86 carries the phosphoserine modification. The JmjC domain occupies 250-395; that stretch reads CSLRLLCPQA…DFLEAVLPLA (146 aa). Fe cation contacts are provided by His296, Asp298, and His361.

The protein belongs to the ROX family. NO66 subfamily. Interacts with SP7/OSX; the interaction is direct. Interacts with MYC. Interacts with PHF19; leading to its recruitment to H3K36me3 sites. The cofactor is Fe(2+).

The protein resides in the nucleus. Its subcellular location is the nucleolus. It localises to the nucleoplasm. It carries out the reaction N(6),N(6)-dimethyl-L-lysyl(36)-[histone H3] + 2 2-oxoglutarate + 2 O2 = L-lysyl(36)-[histone H3] + 2 formaldehyde + 2 succinate + 2 CO2. The enzyme catalyses N(6)-methyl-L-lysyl-[protein] + 2-oxoglutarate + O2 = L-lysyl-[protein] + formaldehyde + succinate + CO2. The catalysed reaction is L-histidyl-[protein] + 2-oxoglutarate + O2 = (3S)-3-hydroxy-L-histidyl-[protein] + succinate + CO2. Functionally, oxygenase that can act as both a histone lysine demethylase and a ribosomal histidine hydroxylase. Specifically demethylates 'Lys-4' (H3K4me) and 'Lys-36' (H3K36me) of histone H3, thereby playing a central role in histone code. Preferentially demethylates trimethylated H3 'Lys-4' (H3K4me3) and monomethylated H3 'Lys-4' (H3K4me1) residues, while it has weaker activity for dimethylated H3 'Lys-36' (H3K36me2). Acts as a regulator of osteoblast differentiation via its interaction with SP7/OSX by demethylating H3K4me and H3K36me, thereby inhibiting SP7/OSX-mediated promoter activation. Also catalyzes demethylation of non-histone proteins, such as CGAS: demethylation of monomethylated CGAS promotes interaction between CGAS and PARP1, followed by PARP1 inactivation. Also catalyzes the hydroxylation of 60S ribosomal protein L8 on 'His-216', thereby playing a role in ribosome biogenesis. Participates in MYC-induced transcriptional activation. The protein is Ribosomal oxygenase 1 of Rattus norvegicus (Rat).